Reading from the N-terminus, the 614-residue chain is Acid phosphatase (614 aa).

An N-terminal signal peptide occupies residues 1 to 22 (MKGTAASALLVALSATAAQARP). A Fibronectin type-III domain is found at 80 to 176 (IPKGMHIHYQ…EVLSFKTSRP (97 aa)). Asparagine 110, asparagine 161, asparagine 242, asparagine 295, asparagine 333, asparagine 340, asparagine 352, asparagine 408, asparagine 429, asparagine 512, asparagine 523, asparagine 559, and asparagine 578 each carry an N-linked (GlcNAc...) asparagine glycan. A propeptide spanning residues 606–614 (VAGGKKLHS) is cleaved from the precursor.

In terms of assembly, monomer. It depends on Cu cation as a cofactor. In terms of processing, glycosylated; probably with N-linked high-mannose oligosaccharides.

The protein localises to the secreted. The catalysed reaction is a phosphate monoester + H2O = an alcohol + phosphate. Competitively inhibited by phosphomycin and inorganic orthophosphate. In Aspergillus ficuum, this protein is Acid phosphatase (aphA).